We begin with the raw amino-acid sequence, 269 residues long: Indole-3-glycerol phosphate synthase (269 aa).

Belongs to the TrpC family.

It carries out the reaction 1-(2-carboxyphenylamino)-1-deoxy-D-ribulose 5-phosphate + H(+) = (1S,2R)-1-C-(indol-3-yl)glycerol 3-phosphate + CO2 + H2O. The protein operates within amino-acid biosynthesis; L-tryptophan biosynthesis; L-tryptophan from chorismate: step 4/5. This Streptomyces griseus subsp. griseus (strain JCM 4626 / CBS 651.72 / NBRC 13350 / KCC S-0626 / ISP 5235) protein is Indole-3-glycerol phosphate synthase.